A 203-amino-acid polypeptide reads, in one-letter code: Ras-like protein family member 10A (203 aa).

A small GTPase-like region spans residues 1–203 (MGGSLRVAVL…ALHPARCSLM (203 aa)). 11–18 (GAPGVGKT) contacts GTP. Positions 33-42 (HRPTDGPRLY) match the Effector region motif. GTP is bound by residues 59–62 (DGDV) and 129–132 (NKRD). Cys200 carries the cysteine methyl ester modification. A lipid anchor (S-farnesyl cysteine) is attached at Cys200. Residues 201-203 (SLM) constitute a propeptide, removed in mature form.

This sequence belongs to the small GTPase superfamily. Ras family. Post-translationally, isoprenylation is essential for nucleolar localization, and the proliferation-inhibiting activity of RASL10A. As to expression, expression appears to be strictly limited to the central nervous system.

The protein resides in the cell membrane. It localises to the nucleus. Its subcellular location is the nucleolus. It carries out the reaction GTP + H2O = GDP + phosphate + H(+). In terms of biological role, potent inhibitor of cellular proliferation. The sequence is that of Ras-like protein family member 10A (RASL10A) from Homo sapiens (Human).